The chain runs to 141 residues: Nucleoside diphosphate kinase (141 aa).

6 residues coordinate ATP: lysine 11, phenylalanine 59, arginine 87, threonine 93, arginine 104, and asparagine 114. Residue histidine 117 is the Pros-phosphohistidine intermediate of the active site.

It belongs to the NDK family. In terms of assembly, homotetramer. Mg(2+) is required as a cofactor.

The protein localises to the cytoplasm. The catalysed reaction is a 2'-deoxyribonucleoside 5'-diphosphate + ATP = a 2'-deoxyribonucleoside 5'-triphosphate + ADP. It catalyses the reaction a ribonucleoside 5'-diphosphate + ATP = a ribonucleoside 5'-triphosphate + ADP. Functionally, major role in the synthesis of nucleoside triphosphates other than ATP. The ATP gamma phosphate is transferred to the NDP beta phosphate via a ping-pong mechanism, using a phosphorylated active-site intermediate. The protein is Nucleoside diphosphate kinase of Pseudomonas fluorescens (strain ATCC BAA-477 / NRRL B-23932 / Pf-5).